The primary structure comprises 358 residues: Diels-Alderase phmD (358 aa).

It belongs to the Diels-Alderase family.

It participates in mycotoxin biosynthesis. Diels-Alderase; part of the gene cluster that mediates the biosynthesis of the mycotoxins phomacins, leucine-derived cytochalasans with potent actin polymerization-inhibitory activities and monocot-specific antigerminative activities. The first step in the pathway is catalyzed by the hybrid PKS-NRPS phmA, assisted by the enoyl reductase phmE, that are responsible for fusion of the leucine precursor and the polyketide backbone to produce a 2-pyrrolidone intermediate. The polyketide synthase module (PKS) of phmA is responsible for the synthesis of the polyketide backbone and the downstream nonribosomal peptide synthetase (NRPS) amidates the carboxyl end of the polyketide with the leucine precursor. Because phmA lacks a designated enoylreductase (ER) domain, the required activity is provided the enoyl reductase phmE. Reduction by the hydrolyase phmG, followed by dehydration and intra-molecular Diels-Alder cyclization by the Diels-Alderase phmD then yield the required isoindolone-fused macrocycle. A number of oxidative steps catalyzed by the tailoring cytochrome P450 monooxygenase phmB, the FAD-linked oxidoreductase phmC and the short-chain dehydrogenase/reductase phmF, are further required to afford the final products, phomacin D and phomacin E. The chain is Diels-Alderase phmD from Phaeosphaeria nodorum (strain SN15 / ATCC MYA-4574 / FGSC 10173) (Glume blotch fungus).